The following is a 224-amino-acid chain: Methylamine utilization ferredoxin-type protein MauM (224 aa).

The signal sequence occupies residues 1–41; the sequence is MEARMTGRRKVTRRDAMADAARAVGVACLGGFSLAALVRTA. 4 4Fe-4S ferredoxin-type domains span residues 54–84, 91–124, 133–169, and 177–208; these read ALPEQDFLAACVHCGLCVQACPYGTLSLAEW, GTPFFTPREVPCYMCKDVPCARACPTGALDRDIP, VAVLVGHETCLNYKGLNCSICVRVCPIRGDAISLEPQ, and MIPVVHSASCTGCGTCEKQCVLGHAAIRVLPR. Positions 64, 67, 70, 74, 102, 105, 110, 114, 142, 150, 153, 157, 186, 189, 192, and 196 each coordinate [4Fe-4S] cluster.

It functions in the pathway one-carbon metabolism; methylamine degradation. Its function is as follows. Involved in electron transfer. The chain is Methylamine utilization ferredoxin-type protein MauM (mauM) from Paracoccus denitrificans (strain Pd 1222).